We begin with the raw amino-acid sequence, 236 residues long: Sperm flagellar protein 1 (236 aa).

The 106-residue stretch at 7–112 folds into the Calponin-homology (CH) domain; the sequence is EEALHQLYLW…VLIPLRQRLE (106 aa). Positions 115–176 are disordered; that stretch reads QRRRKQGAGS…PRPPAYNRAL (62 aa). An essential for homodimerization and microtubule bundling activity region spans residues 183-236; that stretch reads VLQIAEKEQELLASQETVQVLQMKVRRLEHLLQLKNVRIEDLSRRLQQAERKQR.

Homodimer. Interacts with actin, TJP1, CGN and CDH1. In terms of tissue distribution, expressed in the intestinal epithelial cells (at protein level).

It localises to the cytoplasm. The protein resides in the cell projection. Its subcellular location is the cilium. It is found in the flagellum. The protein localises to the cytoskeleton. It localises to the cilium axoneme. The protein resides in the apical cell membrane. Its subcellular location is the basolateral cell membrane. It is found in the stress fiber. The protein localises to the microvillus. It localises to the lamellipodium. The protein resides in the filopodium. Functionally, microtubule-associated protein involved in the stabilization of microtubules along the axis of migration during radial intercalation. Promotes the establishment and stabilization of an axis of microtubules required for the active migration of cells into the outer epithelium. Microtubule-associated protein that promotes microtubule bundling and stabilizes microtubules against depolymerization in response to cold shock. Essential for ciliary central apparatus formation which requires both its microtubule-binding and bundling activities and for ciliary localization of HYDIN and SPAG6 in ependymal cilia. Binds actin in intestinal epithelial cells (IECs), essential for IECs survival and contributes to formation of filopodia and lamellipodia in migrating IECs. Regulates planar cell polarity signaling pathway and asymmetric microtubule accumulation in ciliated epithelia. This Homo sapiens (Human) protein is Sperm flagellar protein 1 (SPEF1).